A 212-amino-acid polypeptide reads, in one-letter code: Glycerol-3-phosphate acyltransferase (212 aa).

The next 5 membrane-spanning stretches (helical) occupy residues 3-23 (ILLA…VIVS), 51-71 (KAAI…VWLA), 78-98 (DVAI…PVFF), 115-135 (AVHP…AFFF), and 139-159 (SLAA…LFGT).

Belongs to the PlsY family. Probably interacts with PlsX.

The protein resides in the cell inner membrane. The catalysed reaction is an acyl phosphate + sn-glycerol 3-phosphate = a 1-acyl-sn-glycero-3-phosphate + phosphate. It participates in lipid metabolism; phospholipid metabolism. In terms of biological role, catalyzes the transfer of an acyl group from acyl-phosphate (acyl-PO(4)) to glycerol-3-phosphate (G3P) to form lysophosphatidic acid (LPA). This enzyme utilizes acyl-phosphate as fatty acyl donor, but not acyl-CoA or acyl-ACP. This chain is Glycerol-3-phosphate acyltransferase, found in Burkholderia multivorans (strain ATCC 17616 / 249).